Consider the following 469-residue polypeptide: Glutamate--tRNA ligase (469 aa).

Positions 11-21 (PSPTGFIHLGN) match the 'HIGH' region motif. Positions 243–247 (KMSKR) match the 'KMSKS' region motif. K246 serves as a coordination point for ATP.

Belongs to the class-I aminoacyl-tRNA synthetase family. Glutamate--tRNA ligase type 1 subfamily. As to quaternary structure, monomer.

It is found in the cytoplasm. The enzyme catalyses tRNA(Glu) + L-glutamate + ATP = L-glutamyl-tRNA(Glu) + AMP + diphosphate. Functionally, catalyzes the attachment of glutamate to tRNA(Glu) in a two-step reaction: glutamate is first activated by ATP to form Glu-AMP and then transferred to the acceptor end of tRNA(Glu). The sequence is that of Glutamate--tRNA ligase from Burkholderia ambifaria (strain MC40-6).